A 541-amino-acid chain; its full sequence is Chaperonin GroEL 2 (541 aa).

Residues 30-33 (TLGP), Lys-51, 87-91 (DGTTT), Gly-414, and Asp-495 each bind ATP.

The protein belongs to the chaperonin (HSP60) family. In terms of assembly, forms a cylinder of 14 subunits composed of two heptameric rings stacked back-to-back. Interacts with the co-chaperonin GroES.

Its subcellular location is the cytoplasm. It carries out the reaction ATP + H2O + a folded polypeptide = ADP + phosphate + an unfolded polypeptide.. Functionally, together with its co-chaperonin GroES, plays an essential role in assisting protein folding. The GroEL-GroES system forms a nano-cage that allows encapsulation of the non-native substrate proteins and provides a physical environment optimized to promote and accelerate protein folding. This chain is Chaperonin GroEL 2, found in Cereibacter sphaeroides (Rhodobacter sphaeroides).